The sequence spans 528 residues: ADP,ATP carrier protein 1 (528 aa).

Helical transmembrane passes span 24 to 44 (LKKVLPMFLMFFCISFNYTIL), 63 to 83 (IPFIKLWLVVPSAVVFMLIYA), 93 to 113 (ALFFAVLSPFVVFFALFPVVI), 124 to 144 (AFADTLQSILPSGFMGFIAML), 149 to 169 (FAVFYVLSELWGSVMLSLMFW), 184 to 204 (FYALFGVGANVALLISGPAII), 220 to 240 (WGVSLYFLMAMFLCSCAIIAA), 284 to 304 (YMLLLALLVICYGICINLVEV), 327 to 347 (FSFWTGVVSVFVMLFIGGNVI), 356 to 376 (ALVTPIMVLVTGAVFFALVIF), 381 to 401 (TGLVAALGTTPLMLAVVVGAI), and 463 to 483 (IGAMTPFLAVALFAIIMVWLT).

Belongs to the ADP/ATP translocase tlc family.

It localises to the cell membrane. This Chlamydia trachomatis serovar D (strain ATCC VR-885 / DSM 19411 / UW-3/Cx) protein is ADP,ATP carrier protein 1 (tlcA).